Reading from the N-terminus, the 295-residue chain is MSWLSKLMPSGIRTENTPAKKRSVPEGLWEKCSNCGSALYGPELEENLEVCPKCDHHMAIRARARLNSLFDPDTATTEIAAQLGPVDALKFKDQKRYGERIKASQKASGEYDALIAMRGTLKGNPLVAAAFDFAFMGGSMGSVVGERFARAAEVALEVGCPFVCFSASGGARMQEGLFSLMQMAKTSAALGRLREAGLPYISVLTHPTTGGVSASFAMLGDINIAEPHALIGFAGPRVIEQTVRETLPEGFQRSEFLLDHGTIDQICDRRQMRDRIAELTAMMMRQPHPQDADAA.

The interval 1-20 is disordered; the sequence is MSWLSKLMPSGIRTENTPAK. The CoA carboxyltransferase N-terminal domain occupies 28 to 295; the sequence is LWEKCSNCGS…QPHPQDADAA (268 aa). 4 residues coordinate Zn(2+): cysteine 32, cysteine 35, cysteine 51, and cysteine 54. Residues 32-54 form a C4-type zinc finger; that stretch reads CSNCGSALYGPELEENLEVCPKC.

This sequence belongs to the AccD/PCCB family. Acetyl-CoA carboxylase is a heterohexamer composed of biotin carboxyl carrier protein (AccB), biotin carboxylase (AccC) and two subunits each of ACCase subunit alpha (AccA) and ACCase subunit beta (AccD). Requires Zn(2+) as cofactor.

It is found in the cytoplasm. It carries out the reaction N(6)-carboxybiotinyl-L-lysyl-[protein] + acetyl-CoA = N(6)-biotinyl-L-lysyl-[protein] + malonyl-CoA. It participates in lipid metabolism; malonyl-CoA biosynthesis; malonyl-CoA from acetyl-CoA: step 1/1. Component of the acetyl coenzyme A carboxylase (ACC) complex. Biotin carboxylase (BC) catalyzes the carboxylation of biotin on its carrier protein (BCCP) and then the CO(2) group is transferred by the transcarboxylase to acetyl-CoA to form malonyl-CoA. This Xanthomonas axonopodis pv. citri (strain 306) protein is Acetyl-coenzyme A carboxylase carboxyl transferase subunit beta.